The sequence spans 283 residues: N-terminal Xaa-Pro-Lys N-methyltransferase 2 (283 aa).

Residues glycine 124, arginine 129, aspartate 146, leucine 174–glutamine 175, and glutamine 190 each bind S-adenosyl-L-methionine.

It belongs to the methyltransferase superfamily. NTM1 family.

It localises to the nucleus. It carries out the reaction N-terminal L-alanyl-L-prolyl-L-lysyl-[protein] + S-adenosyl-L-methionine = N-terminal N-methyl-L-alanyl-L-prolyl-L-lysyl-[protein] + S-adenosyl-L-homocysteine + H(+). The catalysed reaction is N-terminal L-prolyl-L-prolyl-L-lysyl-[protein] + S-adenosyl-L-methionine = N-terminal N-methyl-L-prolyl-L-prolyl-L-lysyl-[protein] + S-adenosyl-L-homocysteine + H(+). The enzyme catalyses N-terminal L-seryl-L-prolyl-L-lysyl-[protein] + S-adenosyl-L-methionine = N-terminal N-methyl-L-seryl-L-prolyl-L-lysyl-[protein] + S-adenosyl-L-homocysteine + H(+). Functionally, alpha N-methyltransferase that methylates the N-terminus of target proteins containing the N-terminal motif [Ala/Pro/Ser]-Pro-Lys when the initiator Met is cleaved. Specifically catalyzes monomethylation of exposed alpha-amino group of Ala or Ser residue in the [Ala/Ser]-Pro-Lys motif and Pro in the Pro-Pro-Lys motif. Predominantly functions as a mono-methyltransferase but is also able to di-/tri-methylate the GPKRIA peptide and di-methylate the PPKRIA peptide (in vitro). May activate NTMT1 by priming its substrates for trimethylation. The polypeptide is N-terminal Xaa-Pro-Lys N-methyltransferase 2 (Ntmt2) (Rattus norvegicus (Rat)).